Consider the following 248-residue polypeptide: ATP synthase subunit a, chloroplastic (248 aa).

Helical transmembrane passes span 96–116 (VPFIGTMFLFIFASNWSGALL), 135–155 (INTTVALALLTSVAYFYAGLY), 200–220 (LVVAVLVSLVPLIVPVPMMLL), and 221–241 (GLFTSGIQALIFATLAAAYIG).

This sequence belongs to the ATPase A chain family. F-type ATPases have 2 components, CF(1) - the catalytic core - and CF(0) - the membrane proton channel. CF(1) has five subunits: alpha(3), beta(3), gamma(1), delta(1), epsilon(1). CF(0) has four main subunits: a, b, b' and c.

It localises to the plastid. Its subcellular location is the chloroplast thylakoid membrane. Functionally, key component of the proton channel; it plays a direct role in the translocation of protons across the membrane. In Adiantum capillus-veneris (Maidenhair fern), this protein is ATP synthase subunit a, chloroplastic.